The primary structure comprises 149 residues: Transcription antitermination protein NusB (149 aa).

It belongs to the NusB family.

Involved in transcription antitermination. Required for transcription of ribosomal RNA (rRNA) genes. Binds specifically to the boxA antiterminator sequence of the ribosomal RNA (rrn) operons. The chain is Transcription antitermination protein NusB from Hahella chejuensis (strain KCTC 2396).